We begin with the raw amino-acid sequence, 101 residues long: NAD(P)H-quinone oxidoreductase subunit 4L, chloroplastic (101 aa).

3 consecutive transmembrane segments (helical) span residues 2-22, 32-52, and 61-81; these read IFEH…YGLI, MCLE…SDFF, and IFSI…PAIV.

Belongs to the complex I subunit 4L family. In terms of assembly, NDH is composed of at least 16 different subunits, 5 of which are encoded in the nucleus.

It is found in the plastid. It localises to the chloroplast thylakoid membrane. It carries out the reaction a plastoquinone + NADH + (n+1) H(+)(in) = a plastoquinol + NAD(+) + n H(+)(out). The catalysed reaction is a plastoquinone + NADPH + (n+1) H(+)(in) = a plastoquinol + NADP(+) + n H(+)(out). NDH shuttles electrons from NAD(P)H:plastoquinone, via FMN and iron-sulfur (Fe-S) centers, to quinones in the photosynthetic chain and possibly in a chloroplast respiratory chain. The immediate electron acceptor for the enzyme in this species is believed to be plastoquinone. Couples the redox reaction to proton translocation, and thus conserves the redox energy in a proton gradient. In Glycine max (Soybean), this protein is NAD(P)H-quinone oxidoreductase subunit 4L, chloroplastic.